Reading from the N-terminus, the 354-residue chain is UDP-N-acetylglucosamine--N-acetylmuramyl-(pentapeptide) pyrophosphoryl-undecaprenol N-acetylglucosamine transferase (354 aa).

UDP-N-acetyl-alpha-D-glucosamine is bound by residues Thr-11–Gly-13, Asn-117, Arg-160, Ser-186, and Gln-288.

It belongs to the glycosyltransferase 28 family. MurG subfamily.

The protein resides in the cell inner membrane. It carries out the reaction di-trans,octa-cis-undecaprenyl diphospho-N-acetyl-alpha-D-muramoyl-L-alanyl-D-glutamyl-meso-2,6-diaminopimeloyl-D-alanyl-D-alanine + UDP-N-acetyl-alpha-D-glucosamine = di-trans,octa-cis-undecaprenyl diphospho-[N-acetyl-alpha-D-glucosaminyl-(1-&gt;4)]-N-acetyl-alpha-D-muramoyl-L-alanyl-D-glutamyl-meso-2,6-diaminopimeloyl-D-alanyl-D-alanine + UDP + H(+). It functions in the pathway cell wall biogenesis; peptidoglycan biosynthesis. Functionally, cell wall formation. Catalyzes the transfer of a GlcNAc subunit on undecaprenyl-pyrophosphoryl-MurNAc-pentapeptide (lipid intermediate I) to form undecaprenyl-pyrophosphoryl-MurNAc-(pentapeptide)GlcNAc (lipid intermediate II). The polypeptide is UDP-N-acetylglucosamine--N-acetylmuramyl-(pentapeptide) pyrophosphoryl-undecaprenol N-acetylglucosamine transferase (Rickettsia canadensis (strain McKiel)).